The following is a 197-amino-acid chain: 7-methyl-GTP pyrophosphatase (197 aa).

The Proton acceptor role is filled by Asp69.

This sequence belongs to the Maf family. YceF subfamily. A divalent metal cation is required as a cofactor.

The protein resides in the cytoplasm. The catalysed reaction is N(7)-methyl-GTP + H2O = N(7)-methyl-GMP + diphosphate + H(+). In terms of biological role, nucleoside triphosphate pyrophosphatase that hydrolyzes 7-methyl-GTP (m(7)GTP). May have a dual role in cell division arrest and in preventing the incorporation of modified nucleotides into cellular nucleic acids. The sequence is that of 7-methyl-GTP pyrophosphatase from Syntrophotalea carbinolica (strain DSM 2380 / NBRC 103641 / GraBd1) (Pelobacter carbinolicus).